We begin with the raw amino-acid sequence, 295 residues long: uncharacterized protein (295 aa).

The protein belongs to the NAD(P)-dependent epimerase/dehydratase family.

This is an uncharacterized protein from Schizosaccharomyces pombe (strain 972 / ATCC 24843) (Fission yeast).